The sequence spans 499 residues: Myocyte-specific enhancer factor 2A (499 aa).

An MADS-box domain is found at 3 to 57 (RKKIQITRIMDERNRQVTFTKRKFGLMKKAYELSVLCDCEIALIIFNSSNKLFQY). An N6-acetyllysine modification is found at K4. Positions 58 to 86 (ASTDMDKVLLKYTEYNEPHESRTNSDIVE) form a DNA-binding region, mef2-type. K117 is modified (N6-acetyllysine). Low complexity predominate over residues 173–185 (TSTTMLSPPQTTL). The interval 173-269 (TSTTMLSPPQ…GGGLGMNNRK (97 aa)) is disordered. The segment covering 210–233 (TDLTVPNGAGTSPVGNGVWNSRAS) has biased composition (polar residues). N6-acetyllysine is present on residues K248, K253, K269, and K281. The tract at residues 265-282 (MNNRKPDLRVVIPPSSKG) is required for interaction with MAPKs. The tract at residues 288–295 (TEEDELEL) is beta domain. Positions 380-392 (VSGSQLSQGSNLS) are enriched in low complexity. The disordered stretch occupies residues 380-499 (VSGSQLSQGS…KRMRMDTWVT (120 aa)). The residue at position 402 (K402) is an N6-acetyllysine; alternate. Residue K402 forms a Glycyl lysine isopeptide (Lys-Gly) (interchain with G-Cter in SUMO); alternate linkage. Pro residues predominate over residues 421–436 (QQPPQQPQPPQPPQQP). Low complexity predominate over residues 445–458 (SPVDSLSSSSSSYD). Basic and acidic residues-rich tracts occupy residues 459-469 (GSDREDPRSDF) and 480-499 (NSED…TWVT).

Binds DNA as a homo- or heterodimer. Sumoylation on Lys-402 is enhanced by PIAS1 and represses transcriptional activity. Has no effect on nuclear location nor on DNA binding. Sumoylated by SUMO1 and, to a lesser extent by SUMO2 and SUMO3. In terms of processing, acetylation on Lys-402 activates transcriptional activity. As to expression, expressed in both embryonic and adult tissues with high expression in heart and skeletal muscle. Also expressed in gut, lung and brain of 15 dpc embryos and adults.

The protein localises to the nucleus. In terms of biological role, transcriptional activator which binds specifically to the MEF2 element, 5'-YTA[AT](4)TAR-3', found in numerous muscle-specific genes. Mediates cellular functions in skeletal and cardiac muscle development,. This chain is Myocyte-specific enhancer factor 2A (MEF2A), found in Gallus gallus (Chicken).